The following is a 366-amino-acid chain: Glucose 1-dehydrogenase (366 aa).

Cys39 provides a ligand contact to Zn(2+). Thr41 serves as a coordination point for substrate. Residues His66 and Glu67 each coordinate Zn(2+). Asn89 lines the substrate pocket. Residues Cys93, Cys96, Cys99, and Cys107 each coordinate Zn(2+). Substrate contacts are provided by Glu114, Gln150, and Asp154. Gln150 is a Zn(2+) binding site. NADP(+) is bound by residues 189 to 192 (TGPI), 211 to 213 (NRR), 277 to 279 (FGF), 305 to 307 (LVN), and Lys354. Substrate is bound at residue Asn307.

It belongs to the zinc-containing alcohol dehydrogenase family. Glucose 1-dehydrogenase subfamily. Homotetramer. The cofactor is Zn(2+).

It carries out the reaction D-glucose + NAD(+) = D-glucono-1,5-lactone + NADH + H(+). The catalysed reaction is D-glucose + NADP(+) = D-glucono-1,5-lactone + NADPH + H(+). The enzyme catalyses D-galactose + NAD(+) = D-galactono-1,4-lactone + NADH + H(+). It catalyses the reaction D-galactose + NADP(+) = D-galactono-1,5-lactone + NADPH + H(+). It carries out the reaction an aldopyranose + NAD(+) = aldono-1,5-lactone + NADH + H(+). The catalysed reaction is an aldopyranose + NADP(+) = aldono-1,5-lactone + NADPH + H(+). Its activity is regulated as follows. Inhibited by EDTA in vitro. Catalyzes the NAD(P)(+)-dependent oxidation of D-glucose to D-gluconate via gluconolactone. Displays broad substrate specificity since it is able to catalyze the oxidation of a number of alternative aldose sugars, such as D-galactose, D-xylose and L-arabinose, to the corresponding glyconate. Can utilize both NAD(+) and NADP(+) as electron acceptor. Physiologically, seems to be involved in the degradation of both glucose and galactose through a non-phosphorylative variant of the Entner-Doudoroff pathway. This Saccharolobus solfataricus (Sulfolobus solfataricus) protein is Glucose 1-dehydrogenase.